Here is a 39-residue protein sequence, read N- to C-terminus: MTSSLSAFINSLLWGAIVVVIPLSAALLFISQKDKIQRN.

Residues 11–31 (SLLWGAIVVVIPLSAALLFIS) traverse the membrane as a helical segment.

Belongs to the PsbX family. Type 1 subfamily. In terms of assembly, PSII is composed of 1 copy each of membrane proteins PsbA, PsbB, PsbC, PsbD, PsbE, PsbF, PsbH, PsbI, PsbJ, PsbK, PsbL, PsbM, PsbT, PsbX, PsbY, PsbZ, Psb30/Ycf12, at least 3 peripheral proteins of the oxygen-evolving complex and a large number of cofactors. It forms dimeric complexes.

It is found in the plastid. Its subcellular location is the cyanelle thylakoid membrane. Its function is as follows. Involved in the binding and/or turnover of quinones at the Q(B) site of photosystem II (PSII). PSII is a light-driven water plastoquinone oxidoreductase, using light energy to abstract electrons from H(2)O, generating a proton gradient subsequently used for ATP formation. This chain is Photosystem II reaction center protein X, found in Cyanophora paradoxa.